The primary structure comprises 188 residues: MSSDLILAPQPLINTKASELPSQSGSPPPEIVYPFQFTIASLGVEPTADFVSIAAQAAITAYTSLYRHAILTDLQAIIHPNGYAPAFPTSVALAWVPYNSTATAAKILDVFGGQEFCVGGSINSTSPIIVPCPLTNINPIIKDSVTYTDTPKLLIYSTAPSYSTSATCTLTIRGKVRLHSPLLSSSSS.

This sequence belongs to the tymoviruses capsid protein family.

The protein resides in the virion. Functionally, self-assembles to form a T=3 icosahedral capsid composed of 180 copies of the capsid protein. The capsid encapsulates the single-stranded RNA genome. This chain is Capsid protein, found in Theobroma cacao (Cacao).